The following is a 159-amino-acid chain: 6,7-dimethyl-8-ribityllumazine synthase (159 aa).

5-amino-6-(D-ribitylamino)uracil contacts are provided by residues Phe-23, 58–60 (AYE), and 82–84 (TII). The active-site Proton donor is His-90. Leu-115 contacts 5-amino-6-(D-ribitylamino)uracil. Arg-129 lines the (2S)-2-hydroxy-3-oxobutyl phosphate pocket.

Belongs to the DMRL synthase family. As to quaternary structure, forms an icosahedral capsid composed of 60 subunits, arranged as a dodecamer of pentamers.

It catalyses the reaction (2S)-2-hydroxy-3-oxobutyl phosphate + 5-amino-6-(D-ribitylamino)uracil = 6,7-dimethyl-8-(1-D-ribityl)lumazine + phosphate + 2 H2O + H(+). It participates in cofactor biosynthesis; riboflavin biosynthesis; riboflavin from 2-hydroxy-3-oxobutyl phosphate and 5-amino-6-(D-ribitylamino)uracil: step 1/2. Its function is as follows. Catalyzes the formation of 6,7-dimethyl-8-ribityllumazine by condensation of 5-amino-6-(D-ribitylamino)uracil with 3,4-dihydroxy-2-butanone 4-phosphate. This is the penultimate step in the biosynthesis of riboflavin. The protein is 6,7-dimethyl-8-ribityllumazine synthase of Blochmanniella floridana.